A 1218-amino-acid chain; its full sequence is Structural maintenance of chromosomes protein 2 (1218 aa).

32–39 (GLNGSGKS) provides a ligand contact to ATP. A coiled-coil region spans residues 209–517 (VKLKKEKEEY…INSVKIDYKI (309 aa)). The 130-residue stretch at 525–654 (DVLGQIYKLI…CSNVDLCKKI (130 aa)) folds into the SMC hinge domain. Coiled coils occupy residues 693–949 (LNYE…DTVK) and 978–1045 (RHDV…KKSE).

It belongs to the SMC family. SMC2 subfamily.

Its subcellular location is the nucleus. In terms of biological role, may play a role in the conversion of interphase chromatin into condensed chromosomes. The sequence is that of Structural maintenance of chromosomes protein 2 from Plasmodium falciparum (isolate 3D7).